Here is a 1888-residue protein sequence, read N- to C-terminus: E3 ubiquitin-protein ligase UBR3 (1888 aa).

Residues 1–24 are disordered; that stretch reads MAAAAAAAVGGQQPSQPELPAPGL. Residues 118-189 form a UBR-type zinc finger; sequence ALCGLVWTAN…ESGFCKRHQI (72 aa). The disordered stretch occupies residues 339–362; the sequence is GQVDSSDEDDQDGSQGLGKRKRVK. Phosphoserine is present on residues serine 343 and serine 344. 2 consecutive transmembrane segments (helical) span residues 761–781 and 919–939; these read MLEG…HLGM and LLHC…ILMD. Disordered regions lie at residues 1008 to 1028 and 1164 to 1186; these read APEV…GSLQ and VPPK…RQKA. Residues 1016–1028 are compositionally biased toward polar residues; it reads PASTSSDNLGSLQ. A coiled-coil region spans residues 1168–1199; that stretch reads KVTAAEKKTLDKEERRQKARERQQKLLAEFAS. Basic and acidic residues predominate over residues 1170–1186; that stretch reads TAAEKKTLDKEERRQKA. Position 1199 is a phosphoserine (serine 1199). Residues 1306 to 1364 form an RING-type; degenerate zinc finger; that stretch reads DSSCLLAVSIGWEGGVYVQTCGHTLHIDCHKSYMESLRNDQVLQGFSVDKGEFTCPLCR. Residues 1806 to 1826 form a helical membrane-spanning segment; that stretch reads QNCGAGTGIFLLINASVIIII.

It belongs to the E3 ubiquitin-protein ligase UBR1-like family. As to quaternary structure, interacts with UBE2A and UBE2B.

Its subcellular location is the membrane. It catalyses the reaction S-ubiquitinyl-[E2 ubiquitin-conjugating enzyme]-L-cysteine + [acceptor protein]-L-lysine = [E2 ubiquitin-conjugating enzyme]-L-cysteine + N(6)-ubiquitinyl-[acceptor protein]-L-lysine.. It participates in protein modification; protein ubiquitination. In terms of biological role, E3 ubiquitin-protein ligase which is a component of the N-end rule pathway. Does not bind to proteins bearing specific N-terminal residues that are destabilizing according to the N-end rule, leading to their ubiquitination and subsequent degradation. May play a role in Shh signaling by mediating the ubiquitination of Kif7. May be important for MYH9 function in certain tissues, possibly by regulating the ubiquitination of MYH9 and consequently affecting its interaction with MYO7A. The sequence is that of E3 ubiquitin-protein ligase UBR3 (UBR3) from Homo sapiens (Human).